The sequence spans 142 residues: Large ribosomal subunit protein uL13 (142 aa).

It belongs to the universal ribosomal protein uL13 family. Part of the 50S ribosomal subunit.

In terms of biological role, this protein is one of the early assembly proteins of the 50S ribosomal subunit, although it is not seen to bind rRNA by itself. It is important during the early stages of 50S assembly. In Methylococcus capsulatus (strain ATCC 33009 / NCIMB 11132 / Bath), this protein is Large ribosomal subunit protein uL13.